A 183-amino-acid chain; its full sequence is DELTA-miturgitoxin-Cp1a (183 aa).

A signal peptide spans 1–20; that stretch reads MKFSLFFSVFFLAVLHACLS. Residues 21–47 constitute a propeptide that is removed on maturation; it reads ESEIDLEDEEHFMSSDSFLSEIQDESR. The Processing quadruplet motif signature appears at 44–47; that stretch reads DESR. 8 cysteine pairs are disulfide-bonded: Cys51–Cys66, Cys58–Cys75, Cys65–Cys88, Cys77–Cys86, Cys115–Cys130, Cys122–Cys139, Cys129–Cys157, and Cys141–Cys155. Domain repeat units follow at residues 51 to 77 and 115 to 141; these read CIER…KCTC and CVPK…QCKC. The segment at 51-141 is 2 X approximate repeats with cysteine pattern C-C-CC-C-C; it reads CIERNKECTN…GGIFKYQCKC (91 aa). Residues 164–177 form a predicted alpha-helix region; that stretch reads QAIEGALRIAKKLI. Trp181 bears the Tryptophan amide mark.

Belongs to the neurotoxin 19 (CSTX) family. Double-CSTX subfamily. Cleavage of the propeptide depends on the processing quadruplet motif (XXXR, with at least one of X being E). As to expression, expressed by the venom gland.

Its subcellular location is the secreted. The protein localises to the target cell membrane. Its function is as follows. Spider venom toxin that exhibits cytolytic activity by forming an alpha-helix across the membrane. Lethal to insect larvae. Causes instant paralysis and death in the larvae of the flesh fly (S.carnaria) at doses of 20 ug/g, at doses of less than 10 ug/g causes reversible paralysis. Has cytolytic activity against insect Sf9 cells. Causes stable and irreversible depolarization of fly muscle fibers, leading to contracture at higher toxin concentrations. Destabilizes membranes. In Cheiracanthium punctorium (Yellow sac spider), this protein is DELTA-miturgitoxin-Cp1a.